Reading from the N-terminus, the 273-residue chain is 4-hydroxy-tetrahydrodipicolinate reductase (273 aa).

NAD(+)-binding positions include 12-17 (GAGGRM) and Glu-38. Arg-39 contacts NADP(+). Residues 102–104 (GTT) and 126–129 (AANF) contribute to the NAD(+) site. The active-site Proton donor/acceptor is His-159. His-160 is a binding site for (S)-2,3,4,5-tetrahydrodipicolinate. Catalysis depends on Lys-163, which acts as the Proton donor. Residue 169–170 (GT) participates in (S)-2,3,4,5-tetrahydrodipicolinate binding.

It belongs to the DapB family. As to quaternary structure, homotetramer.

It is found in the cytoplasm. It carries out the reaction (S)-2,3,4,5-tetrahydrodipicolinate + NAD(+) + H2O = (2S,4S)-4-hydroxy-2,3,4,5-tetrahydrodipicolinate + NADH + H(+). It catalyses the reaction (S)-2,3,4,5-tetrahydrodipicolinate + NADP(+) + H2O = (2S,4S)-4-hydroxy-2,3,4,5-tetrahydrodipicolinate + NADPH + H(+). It functions in the pathway amino-acid biosynthesis; L-lysine biosynthesis via DAP pathway; (S)-tetrahydrodipicolinate from L-aspartate: step 4/4. Functionally, catalyzes the conversion of 4-hydroxy-tetrahydrodipicolinate (HTPA) to tetrahydrodipicolinate. The chain is 4-hydroxy-tetrahydrodipicolinate reductase from Salmonella dublin (strain CT_02021853).